The sequence spans 1845 residues: Proteasome activator complex subunit 4 (1845 aa).

Residues 1–13 are compositionally biased toward basic and acidic residues; the sequence is MEPAERAGGRDPL. A disordered region spans residues 1 to 26; the sequence is MEPAERAGGRDPLEPGGRPGPDPQGF. 2 HEAT repeats span residues 475-519 and 1000-1039; these read PEGP…LVDC and NFCC…NHSG. Phosphoserine is present on Ser-1123. HEAT repeat units lie at residues 1181–1219 and 1356–1394; these read RVLP…QLKR and DAFL…GSKH. Ser-1616 is subject to Phosphoserine. HEAT repeat units lie at residues 1638–1676 and 1682–1720; these read PHQV…YNLF and EDAV…CNFL. Positions 1652–1740 are bromodomain-like (BRDL); that stretch reads ARSSSWHARY…EQLCKTKLPK (89 aa).

It belongs to the BLM10 family. In terms of assembly, homodimer. Component of the spermatoproteasome, a form of the proteasome specifically found in testis. Interacts with the 20S and 26S proteasomes. Phosphorylated.

The protein localises to the cytoplasm. It is found in the cytosol. The protein resides in the nucleus. It localises to the nucleus speckle. Associated component of the proteasome that specifically recognizes acetylated histones and promotes ATP- and ubiquitin-independent degradation of core histones during spermatogenesis and DNA damage response. Recognizes and binds acetylated histones via its bromodomain-like (BRDL) region and activates the proteasome by opening the gated channel for substrate entry. Binds to the core proteasome via its C-terminus, which occupies the same binding sites as the proteasomal ATPases, opening the closed structure of the proteasome via an active gating mechanism. Component of the spermatoproteasome, a form of the proteasome specifically found in testis: binds to acetylated histones and promotes degradation of histones, thereby participating actively to the exchange of histones during spermatogenesis. Also involved in DNA damage response in somatic cells, by promoting degradation of histones following DNA double-strand breaks. In Bos taurus (Bovine), this protein is Proteasome activator complex subunit 4 (PSME4).